A 66-amino-acid polypeptide reads, in one-letter code: Large ribosomal subunit protein eL24 (66 aa).

Positions 7, 10, 33, and 37 each coordinate Zn(2+). The C4-type zinc-finger motif lies at 7-37; it reads CSYCGKPFEPGTGKMYVRNDGRVLFFCSRKC.

The protein belongs to the eukaryotic ribosomal protein eL24 family. As to quaternary structure, part of the 50S ribosomal subunit. Forms a cluster with proteins L3 and L14. Zn(2+) is required as a cofactor.

Its function is as follows. Binds to the 23S rRNA. This Pyrococcus furiosus (strain ATCC 43587 / DSM 3638 / JCM 8422 / Vc1) protein is Large ribosomal subunit protein eL24.